The following is a 389-amino-acid chain: Chorismate synthase (389 aa).

Positions 40 and 46 each coordinate NADP(+). FMN-binding positions include 131 to 133, 252 to 253, Gly-297, 312 to 316, and Arg-338; these read RSS, NA, and KPIPT.

The protein belongs to the chorismate synthase family. In terms of assembly, homotetramer. FMNH2 is required as a cofactor.

The enzyme catalyses 5-O-(1-carboxyvinyl)-3-phosphoshikimate = chorismate + phosphate. It participates in metabolic intermediate biosynthesis; chorismate biosynthesis; chorismate from D-erythrose 4-phosphate and phosphoenolpyruvate: step 7/7. Functionally, catalyzes the anti-1,4-elimination of the C-3 phosphate and the C-6 proR hydrogen from 5-enolpyruvylshikimate-3-phosphate (EPSP) to yield chorismate, which is the branch point compound that serves as the starting substrate for the three terminal pathways of aromatic amino acid biosynthesis. This reaction introduces a second double bond into the aromatic ring system. The chain is Chorismate synthase from Lactiplantibacillus plantarum (strain ATCC BAA-793 / NCIMB 8826 / WCFS1) (Lactobacillus plantarum).